The sequence spans 299 residues: UDP-N-acetylenolpyruvoylglucosamine reductase (299 aa).

The FAD-binding PCMH-type domain maps to L19 to S192. Residue R169 is part of the active site. C221 serves as the catalytic Proton donor. Residue E292 is part of the active site.

This sequence belongs to the MurB family. It depends on FAD as a cofactor.

It localises to the cytoplasm. It carries out the reaction UDP-N-acetyl-alpha-D-muramate + NADP(+) = UDP-N-acetyl-3-O-(1-carboxyvinyl)-alpha-D-glucosamine + NADPH + H(+). It functions in the pathway cell wall biogenesis; peptidoglycan biosynthesis. Functionally, cell wall formation. The chain is UDP-N-acetylenolpyruvoylglucosamine reductase from Oleidesulfovibrio alaskensis (strain ATCC BAA-1058 / DSM 17464 / G20) (Desulfovibrio alaskensis).